We begin with the raw amino-acid sequence, 38 residues long: Large ribosomal subunit protein bL36A (38 aa).

This sequence belongs to the bacterial ribosomal protein bL36 family.

The protein is Large ribosomal subunit protein bL36A of Enterobacter sp. (strain 638).